Reading from the N-terminus, the 744-residue chain is Cytoskeleton-associated protein 2-like (744 aa).

5 disordered regions span residues Y35 to K56, L76 to E169, K182 to A216, T317 to G337, and N428 to T452. Composition is skewed to polar residues over residues L76–S86, S102–G129, and G137–Q154. K195 participates in a covalent cross-link: Glycyl lysine isopeptide (Lys-Gly) (interchain with G-Cter in SUMO1); alternate. A Glycyl lysine isopeptide (Lys-Gly) (interchain with G-Cter in SUMO2); alternate cross-link involves residue K195. Over residues E199–A216 the composition is skewed to polar residues. At S744 the chain carries Phosphoserine.

Belongs to the CKAP2 family. In terms of processing, ubiquitinated by the anaphase promoting complex/cyclosome (APC/C).

It localises to the cytoplasm. It is found in the cytoskeleton. The protein resides in the spindle pole. Its function is as follows. Microtubule-associated protein required for mitotic spindle formation and cell-cycle progression in neural progenitor cells. In Bos taurus (Bovine), this protein is Cytoskeleton-associated protein 2-like (CKAP2L).